The primary structure comprises 104 residues: L-rhamnose mutarotase (104 aa).

Y18 is a binding site for substrate. Catalysis depends on H22, which acts as the Proton donor. Substrate-binding positions include Y41 and 76 to 77; that span reads WW.

It belongs to the rhamnose mutarotase family. Homodimer.

It localises to the cytoplasm. It carries out the reaction alpha-L-rhamnose = beta-L-rhamnose. The protein operates within carbohydrate metabolism; L-rhamnose metabolism. In terms of biological role, involved in the anomeric conversion of L-rhamnose. The polypeptide is L-rhamnose mutarotase (Klebsiella pneumoniae subsp. pneumoniae (strain ATCC 700721 / MGH 78578)).